A 584-amino-acid polypeptide reads, in one-letter code: FAD-linked oxidoreductase OXR2 (584 aa).

Positions 1-22 (MRSIISAFILSLNFCTQPLVRG) are cleaved as a signal peptide. Asn75, Asn97, Asn115, Asn225, Asn302, Asn321, and Asn507 each carry an N-linked (GlcNAc...) asparagine glycan. The FAD-binding PCMH-type domain maps to 128 to 310 (LGMLSEKYIA…LNATFKVEPV (183 aa)).

It belongs to the oxygen-dependent FAD-linked oxidoreductase family. FAD is required as a cofactor.

It participates in secondary metabolite biosynthesis. Its function is as follows. FAD-linked oxidoreductase; part of the gene cluster that mediates the biosynthesis of a tyrosine-derived cytochalasan acting as a fungal signal recognized by resistant rice plants and leads to avirulence in Pi33 resistant rice cultivars. The first step in the pathway is catalyzed by the hybrid PKS-NRPS ACE1, assisted by the enoyl reductase RAP1, that are responsible for fusion of the tyrosine precursor and the polyketide backbone. The polyketide synthase module (PKS) of ACE1 is responsible for the synthesis of the polyketide backbone and the downstream nonribosomal peptide synthetase (NRPS) amidates the carboxyl end of the polyketide with the tyrosine precursor. Because ACE1 lacks a designated enoylreductase (ER) domain, the required activity is provided the enoyl reductase RAP1. Reduction by the hydrolyase ORFZ, followed by dehydration and intra-molecular Diels-Alder cyclization by the Diels-Alderase ORF3 then yield the required isoindolone-fused macrocycle. A number of oxidative steps catalyzed by the tailoring enzymes identified within the cluster, including cytochrome P450 monooxygenases CYP1 to CYP4, the FAD-linked oxidoreductase OXR2 and the short-chain dehydrogenase/reductase OXR1, are further required to afford the final cytochalasans that confer avirulence and which have still to be identified. The monooxygenase CYP1 has been shown to be a site-selective C-18 hydroxylase whereas the function of CYP3 is the site-selective epoxidation of the C-6/C-7 olefin that is present in some intermediate compounds. Finally, SYN2 and RAP2 are not required for avirulence in Pi33 resistant rice cultivars. In Pyricularia oryzae (strain 70-15 / ATCC MYA-4617 / FGSC 8958) (Rice blast fungus), this protein is FAD-linked oxidoreductase OXR2.